Reading from the N-terminus, the 80-residue chain is Cell division protein ZapB (80 aa).

Residues F3–E80 are a coiled coil.

Belongs to the ZapB family. As to quaternary structure, homodimer. The ends of the coiled-coil dimer bind to each other, forming polymers. Interacts with FtsZ.

It localises to the cytoplasm. Functionally, non-essential, abundant cell division factor that is required for proper Z-ring formation. It is recruited early to the divisome by direct interaction with FtsZ, stimulating Z-ring assembly and thereby promoting cell division earlier in the cell cycle. Its recruitment to the Z-ring requires functional FtsA or ZipA. This is Cell division protein ZapB from Vibrio vulnificus (strain CMCP6).